The chain runs to 122 residues: Large ribosomal subunit protein eL34 (122 aa).

It belongs to the eukaryotic ribosomal protein eL34 family.

This is Large ribosomal subunit protein eL34 (rpl34) from Dictyostelium discoideum (Social amoeba).